The primary structure comprises 150 residues: D-aminoacyl-tRNA deacylase (150 aa).

Positions glycine 138–proline 139 match the Gly-cisPro motif, important for rejection of L-amino acids motif.

This sequence belongs to the DTD family. As to quaternary structure, homodimer.

The protein localises to the cytoplasm. It catalyses the reaction glycyl-tRNA(Ala) + H2O = tRNA(Ala) + glycine + H(+). The enzyme catalyses a D-aminoacyl-tRNA + H2O = a tRNA + a D-alpha-amino acid + H(+). In terms of biological role, an aminoacyl-tRNA editing enzyme that deacylates mischarged D-aminoacyl-tRNAs. Also deacylates mischarged glycyl-tRNA(Ala), protecting cells against glycine mischarging by AlaRS. Acts via tRNA-based rather than protein-based catalysis; rejects L-amino acids rather than detecting D-amino acids in the active site. By recycling D-aminoacyl-tRNA to D-amino acids and free tRNA molecules, this enzyme counteracts the toxicity associated with the formation of D-aminoacyl-tRNA entities in vivo and helps enforce protein L-homochirality. The chain is D-aminoacyl-tRNA deacylase from Opitutus terrae (strain DSM 11246 / JCM 15787 / PB90-1).